A 606-amino-acid chain; its full sequence is Fructan 6-exohydrolase (606 aa).

The signal sequence occupies residues 1–21; that stretch reads MAPNNGSWLVLSISMMLLSHG. Asn-5 carries an N-linked (GlcNAc...) asparagine glycan. The active site involves Asp-70. N-linked (GlcNAc...) asparagine glycans are attached at residues Asn-110, Asn-164, Asn-193, Asn-237, and Asn-346. Cysteines 445 and 491 form a disulfide. 4 N-linked (GlcNAc...) asparagine glycosylation sites follow: Asn-564, Asn-585, Asn-590, and Asn-593.

It belongs to the glycosyl hydrolase 32 family.

The catalysed reaction is Hydrolysis of terminal, non-reducing (2-&gt;6)-linked beta-D-fructofuranose residues in fructans.. With respect to regulation, not inhibited by sucrose. In terms of biological role, hydrolyzes levan-type beta-(2-&gt;6)-linked fructans to fructose, but not inulin-type beta-(2-&gt;1)-linked fructans. This is Fructan 6-exohydrolase from Beta vulgaris (Sugar beet).